The primary structure comprises 119 residues: Large ribosomal subunit protein uL24 (119 aa).

It belongs to the universal ribosomal protein uL24 family. In terms of assembly, part of the 50S ribosomal subunit.

One of two assembly initiator proteins, it binds directly to the 5'-end of the 23S rRNA, where it nucleates assembly of the 50S subunit. Its function is as follows. Located at the polypeptide exit tunnel on the outside of the subunit. The sequence is that of Large ribosomal subunit protein uL24 from Methanococcus maripaludis (strain DSM 14266 / JCM 13030 / NBRC 101832 / S2 / LL).